The chain runs to 322 residues: tRNA-modifying protein YgfZ (322 aa).

A folate-binding site is contributed by W182.

Belongs to the tRNA-modifying YgfZ family.

It localises to the cytoplasm. Folate-binding protein involved in regulating the level of ATP-DnaA and in the modification of some tRNAs. It is probably a key factor in regulatory networks that act via tRNA modification, such as initiation of chromosomal replication. This is tRNA-modifying protein YgfZ from Vibrio campbellii (strain ATCC BAA-1116).